A 323-amino-acid polypeptide reads, in one-letter code: Homocysteine S-methyltransferase 1 (323 aa).

One can recognise a Hcy-binding domain in the interval 3–317 (VLEDLVARAG…STIRAVSKIL (315 aa)). C235, C302, and C303 together coordinate Zn(2+).

In terms of assembly, monomer. Zn(2+) serves as cofactor.

The catalysed reaction is S-methyl-L-methionine + L-homocysteine = 2 L-methionine + H(+). In terms of biological role, catalyzes methyl transfer from S-methylmethionine (SMM) to adenosyl-L-homocysteine (AdoMet). SMM degradation (by HMT-1, HMT-2, HMT-3 and HMT-4) and biosynthesis (by MMT1) constitute the SMM cycle in plants, which is probably required to achieve short term control of AdoMet level. The protein is Homocysteine S-methyltransferase 1 (HMT-1) of Zea mays (Maize).